The primary structure comprises 133 residues: Small ribosomal subunit protein uS8 (133 aa).

Residues 1 to 28 (MANHDPISDMLTRIRNASEKRHEKTKVP) are disordered. Residues 16–26 (NASEKRHEKTK) show a composition bias toward basic and acidic residues.

Belongs to the universal ribosomal protein uS8 family. As to quaternary structure, part of the 30S ribosomal subunit. Contacts proteins S5 and S12.

Its function is as follows. One of the primary rRNA binding proteins, it binds directly to 16S rRNA central domain where it helps coordinate assembly of the platform of the 30S subunit. The sequence is that of Small ribosomal subunit protein uS8 from Prochlorococcus marinus (strain NATL1A).